Reading from the N-terminus, the 184-residue chain is CKLF-like MARVEL transmembrane domain-containing protein 3 (184 aa).

The segment covering 1 to 12 has biased composition (acidic residues); it reads MWPPDAEPEPDP. The interval 1-22 is disordered; it reads MWPPDAEPEPDPESAHGPRSGR. The region spanning 36–155 is the MARVEL domain; it reads FLCSLKGRLL…DFYLIFNEVA (120 aa). 3 helical membrane passes run 64–84, 96–116, and 131–151; these read ASAF…FLFA, LCWP…YFVI, and AAGV…YLIF. A disordered region spans residues 163–184; that stretch reads SGNETTAHRTEEENSNSDSDSD. The segment covering 175–184 has biased composition (acidic residues); that stretch reads ENSNSDSDSD.

This sequence belongs to the chemokine-like factor family.

It localises to the membrane. This chain is CKLF-like MARVEL transmembrane domain-containing protein 3 (Cmtm3), found in Mus musculus (Mouse).